Consider the following 258-residue polypeptide: Imidazole glycerol phosphate synthase subunit HisF (258 aa).

Residues Asp-11 and Asp-130 contribute to the active site.

Belongs to the HisA/HisF family. Heterodimer of HisH and HisF.

It localises to the cytoplasm. It carries out the reaction 5-[(5-phospho-1-deoxy-D-ribulos-1-ylimino)methylamino]-1-(5-phospho-beta-D-ribosyl)imidazole-4-carboxamide + L-glutamine = D-erythro-1-(imidazol-4-yl)glycerol 3-phosphate + 5-amino-1-(5-phospho-beta-D-ribosyl)imidazole-4-carboxamide + L-glutamate + H(+). The protein operates within amino-acid biosynthesis; L-histidine biosynthesis; L-histidine from 5-phospho-alpha-D-ribose 1-diphosphate: step 5/9. IGPS catalyzes the conversion of PRFAR and glutamine to IGP, AICAR and glutamate. The HisF subunit catalyzes the cyclization activity that produces IGP and AICAR from PRFAR using the ammonia provided by the HisH subunit. This Klebsiella pneumoniae (strain 342) protein is Imidazole glycerol phosphate synthase subunit HisF.